A 327-amino-acid chain; its full sequence is Interleukin-12 subunit beta (327 aa).

The signal sequence occupies residues M1–A22. The Ig-like C2-type domain occupies M23–K106. An intrachain disulfide couples C50 to C90. N-linked (GlcNAc...) asparagine glycosylation occurs at N223. A Fibronectin type-III domain is found at P238–S327.

It belongs to the IL-12B family. As to quaternary structure, heterodimer with IL12A; disulfide-linked. The heterodimer is known as interleukin IL-12. Heterodimer with IL23A; disulfide-linked. The heterodimer is known as interleukin IL-23. Also secreted as a monomer. Interacts with NBR1; this interaction promotes IL-12 secretion.

It is found in the secreted. Functionally, cytokine that can act as a growth factor for activated T and NK cells, enhance the lytic activity of NK/lymphokine-activated killer cells, and stimulate the production of IFN-gamma by resting PBMC. In terms of biological role, associates with IL23A to form the IL-23 interleukin, a heterodimeric cytokine which functions in innate and adaptive immunity. IL-23 may constitute with IL-17 an acute response to infection in peripheral tissues. IL-23 binds to a heterodimeric receptor complex composed of IL12RB1 and IL23R, activates the Jak-Stat signaling cascade, stimulates memory rather than naive T-cells and promotes production of pro-inflammatory cytokines. IL-23 induces autoimmune inflammation and thus may be responsible for autoimmune inflammatory diseases and may be important for tumorigenesis. The protein is Interleukin-12 subunit beta (IL12B) of Bos taurus (Bovine).